A 469-amino-acid chain; its full sequence is Phosphoenolpyruvate carboxylase (469 aa).

This sequence belongs to the PEPCase type 2 family. In terms of assembly, homotetramer. It depends on Mg(2+) as a cofactor.

It catalyses the reaction oxaloacetate + phosphate = phosphoenolpyruvate + hydrogencarbonate. Catalyzes the irreversible beta-carboxylation of phosphoenolpyruvate (PEP) to form oxaloacetate (OAA), a four-carbon dicarboxylic acid source for the tricarboxylic acid cycle. The polypeptide is Phosphoenolpyruvate carboxylase (Pyrococcus abyssi (strain GE5 / Orsay)).